Here is a 91-residue protein sequence, read N- to C-terminus: Small ribosomal subunit protein uS19 (91 aa).

The protein belongs to the universal ribosomal protein uS19 family.

Protein S19 forms a complex with S13 that binds strongly to the 16S ribosomal RNA. The chain is Small ribosomal subunit protein uS19 from Shouchella clausii (strain KSM-K16) (Alkalihalobacillus clausii).